Reading from the N-terminus, the 152-residue chain is Superoxide dismutase [Cu-Zn] 1 (152 aa).

Positions 45, 47, and 62 each coordinate Cu cation. An intrachain disulfide couples Cys56 to Cys145. Residues His62, His70, His79, and Asp82 each contribute to the Zn(2+) site. Residue His119 participates in Cu cation binding.

This sequence belongs to the Cu-Zn superoxide dismutase family. As to quaternary structure, homodimer. Cu cation is required as a cofactor. Zn(2+) serves as cofactor.

Its subcellular location is the cytoplasm. It carries out the reaction 2 superoxide + 2 H(+) = H2O2 + O2. Its function is as follows. Destroys radicals which are normally produced within the cells and which are toxic to biological systems. The chain is Superoxide dismutase [Cu-Zn] 1 (SODCC.1) from Solanum lycopersicum (Tomato).